A 137-amino-acid polypeptide reads, in one-letter code: MADRGIFLYPFRRFQEWSRSTALIDWMESNNSHIFKINVPGYNKEDIKVQIEEGNVLSIRGEGIKEEKKENLVWHVAEREAFSGGGSEFLRRIELPENVKVDQVKAYVENGVLTVVVPKDTSSKSSKVRNVNITSKL.

Residues 15 to 134 form the sHSP domain; it reads QEWSRSTALI…SSKVRNVNIT (120 aa). The short motif at 135-137 is the Microbody targeting signal element; that stretch reads SKL.

This sequence belongs to the small heat shock protein (HSP20) family. As to quaternary structure, may form oligomeric structures.

The protein localises to the peroxisome. In terms of biological role, possesses chaperone activity. This Arabidopsis thaliana (Mouse-ear cress) protein is 15.7 kDa heat shock protein, peroxisomal (HSP15.7).